The following is a 607-amino-acid chain: UvrABC system protein C (607 aa).

A GIY-YIG domain is found at 15-94 (ENPGVYLMKN…IKRHRPYFNV (80 aa)). Residues 204 to 239 (DQVLKLLIRLMNEASARLDYETAALRRDQIASIKEV) form the UVR domain.

The protein belongs to the UvrC family. In terms of assembly, interacts with UvrB in an incision complex.

The protein resides in the cytoplasm. Its function is as follows. The UvrABC repair system catalyzes the recognition and processing of DNA lesions. UvrC both incises the 5' and 3' sides of the lesion. The N-terminal half is responsible for the 3' incision and the C-terminal half is responsible for the 5' incision. In Dehalococcoides mccartyi (strain CBDB1), this protein is UvrABC system protein C.